A 106-amino-acid chain; its full sequence is Follitropin subunit beta (106 aa).

Disulfide bonds link C1–C49, C15–C64, C18–C102, C26–C80, C30–C82, and C85–C92. N5 and N22 each carry an N-linked (GlcNAc...) asparagine glycan.

The protein belongs to the glycoprotein hormones subunit beta family. Heterodimer. The active follitropin is a heterodimer composed of an alpha chain/CGA shared with other hormones and a unique beta chain/FSHB shown here.

It localises to the secreted. Together with the alpha chain CGA constitutes follitropin, the follicle-stimulating hormone, and provides its biological specificity to the hormone heterodimer. Binds FSHR, a G protein-coupled receptor, on target cells to activate downstream signaling pathways. Follitropin is involved in follicle development and spermatogenesis in reproductive organs. The chain is Follitropin subunit beta (FSHB) from Struthio camelus (Common ostrich).